Reading from the N-terminus, the 336-residue chain is 4-hydroxythreonine-4-phosphate dehydrogenase (336 aa).

Substrate contacts are provided by His-135 and Thr-136. A divalent metal cation contacts are provided by His-165, His-210, and His-265. Residues Lys-273, Asn-282, and Arg-291 each coordinate substrate.

Belongs to the PdxA family. Homodimer. Zn(2+) is required as a cofactor. It depends on Mg(2+) as a cofactor. Requires Co(2+) as cofactor.

Its subcellular location is the cytoplasm. The enzyme catalyses 4-(phosphooxy)-L-threonine + NAD(+) = 3-amino-2-oxopropyl phosphate + CO2 + NADH. The protein operates within cofactor biosynthesis; pyridoxine 5'-phosphate biosynthesis; pyridoxine 5'-phosphate from D-erythrose 4-phosphate: step 4/5. Functionally, catalyzes the NAD(P)-dependent oxidation of 4-(phosphooxy)-L-threonine (HTP) into 2-amino-3-oxo-4-(phosphooxy)butyric acid which spontaneously decarboxylates to form 3-amino-2-oxopropyl phosphate (AHAP). The protein is 4-hydroxythreonine-4-phosphate dehydrogenase of Marinobacter nauticus (strain ATCC 700491 / DSM 11845 / VT8) (Marinobacter aquaeolei).